The chain runs to 734 residues: 1,4-alpha-glucan branching enzyme GlgB (734 aa).

Residue Asp413 is the Nucleophile of the active site. Glu466 functions as the Proton donor in the catalytic mechanism.

The protein belongs to the glycosyl hydrolase 13 family. GlgB subfamily. Monomer.

The catalysed reaction is Transfers a segment of a (1-&gt;4)-alpha-D-glucan chain to a primary hydroxy group in a similar glucan chain.. The protein operates within glycan biosynthesis; glycogen biosynthesis. Its function is as follows. Catalyzes the formation of the alpha-1,6-glucosidic linkages in glycogen by scission of a 1,4-alpha-linked oligosaccharide from growing alpha-1,4-glucan chains and the subsequent attachment of the oligosaccharide to the alpha-1,6 position. The sequence is that of 1,4-alpha-glucan branching enzyme GlgB from Nitrosomonas europaea (strain ATCC 19718 / CIP 103999 / KCTC 2705 / NBRC 14298).